The sequence spans 144 residues: 6-pyruvoyl tetrahydrobiopterin synthase (144 aa).

The propeptide occupies 1-4 (MNAA). Ser-18 is modified (phosphoserine). His-23 provides a ligand contact to Zn(2+). Ser-27 carries the post-translational modification Phosphoserine. Cys-42 functions as the Proton acceptor in the catalytic mechanism. His-48 and His-50 together coordinate Zn(2+). The active-site Charge relay system is the His-89. Residue Tyr-127 is modified to Phosphotyrosine. Glu-133 serves as the catalytic Charge relay system.

Belongs to the PTPS family. In terms of assembly, homohexamer formed of two homotrimers in a head to head fashion. It depends on Zn(2+) as a cofactor. Post-translationally, phosphorylation of Ser-18 is required for maximal enzyme activity.

It carries out the reaction 7,8-dihydroneopterin 3'-triphosphate = 6-pyruvoyl-5,6,7,8-tetrahydropterin + triphosphate + H(+). It participates in cofactor biosynthesis; tetrahydrobiopterin biosynthesis; tetrahydrobiopterin from 7,8-dihydroneopterin triphosphate: step 1/3. Its function is as follows. Involved in the biosynthesis of tetrahydrobiopterin, an essential cofactor of aromatic amino acid hydroxylases. Catalyzes the transformation of 7,8-dihydroneopterin triphosphate into 6-pyruvoyl tetrahydropterin. This Rattus norvegicus (Rat) protein is 6-pyruvoyl tetrahydrobiopterin synthase (Pts).